Here is a 183-residue protein sequence, read N- to C-terminus: uncharacterized protein (183 aa).

This sequence belongs to the asfivirus S183L family.

This is an uncharacterized protein from Ornithodoros (relapsing fever ticks).